Consider the following 202-residue polypeptide: UPF0301 protein BCG_0069 (202 aa).

This sequence belongs to the UPF0301 (AlgH) family.

This Mycobacterium bovis (strain BCG / Pasteur 1173P2) protein is UPF0301 protein BCG_0069.